A 29-amino-acid chain; its full sequence is Amelogenin-like protein (29 aa).

Position 16 is a phosphoserine (Ser16).

Belongs to the amelogenin family.

Its subcellular location is the secreted. It localises to the extracellular space. It is found in the extracellular matrix. Tooth enamel proteins are produced in ameloblasts and play a role in biomineralization. This is Amelogenin-like protein (AMEL) from Oryctolagus cuniculus (Rabbit).